We begin with the raw amino-acid sequence, 145 residues long: D-aminoacyl-tRNA deacylase (145 aa).

The Gly-cisPro motif, important for rejection of L-amino acids motif lies at Gly-137–Pro-138.

Belongs to the DTD family. As to quaternary structure, homodimer.

The protein resides in the cytoplasm. It carries out the reaction glycyl-tRNA(Ala) + H2O = tRNA(Ala) + glycine + H(+). The enzyme catalyses a D-aminoacyl-tRNA + H2O = a tRNA + a D-alpha-amino acid + H(+). Functionally, an aminoacyl-tRNA editing enzyme that deacylates mischarged D-aminoacyl-tRNAs. Also deacylates mischarged glycyl-tRNA(Ala), protecting cells against glycine mischarging by AlaRS. Acts via tRNA-based rather than protein-based catalysis; rejects L-amino acids rather than detecting D-amino acids in the active site. By recycling D-aminoacyl-tRNA to D-amino acids and free tRNA molecules, this enzyme counteracts the toxicity associated with the formation of D-aminoacyl-tRNA entities in vivo and helps enforce protein L-homochirality. In Shewanella sp. (strain ANA-3), this protein is D-aminoacyl-tRNA deacylase.